Consider the following 209-residue polypeptide: MRKKPIIIGVTGGSGGGKTSVSRAILSNFPDQKITMIEHDSYYKDQSHLTFEERVKTNYDHPLAFDTNLMIEQLNELIEGRPVDIPVYDYTKHTRSDRTIRQEPQDVIIVEGILVLEDQRLRDLMDIKLFVDTDDDIRIIRRIKRDMEERDRSLDSIIEQYTEVVKPMYHQFIEPTKRYADIVIPEGVSNIVAIDLINTKVASILNEAK.

Residue 12-19 coordinates ATP; the sequence is GGSGGGKT.

It belongs to the uridine kinase family.

Its subcellular location is the cytoplasm. It carries out the reaction uridine + ATP = UMP + ADP + H(+). It catalyses the reaction cytidine + ATP = CMP + ADP + H(+). Its pathway is pyrimidine metabolism; CTP biosynthesis via salvage pathway; CTP from cytidine: step 1/3. It functions in the pathway pyrimidine metabolism; UMP biosynthesis via salvage pathway; UMP from uridine: step 1/1. This Streptococcus agalactiae serotype V (strain ATCC BAA-611 / 2603 V/R) protein is Uridine kinase.